The following is a 200-amino-acid chain: NAD(P)H dehydrogenase (quinone) (200 aa).

The region spanning valine 4–valine 191 is the Flavodoxin-like domain. Residues serine 10–valine 15 and threonine 79–phenylalanine 81 each bind FMN. Tyrosine 12 provides a ligand contact to NAD(+). Residue tryptophan 99 coordinates substrate. FMN contacts are provided by residues serine 114–glycine 120 and histidine 135.

Belongs to the WrbA family. Requires FMN as cofactor.

The enzyme catalyses a quinone + NADH + H(+) = a quinol + NAD(+). The catalysed reaction is a quinone + NADPH + H(+) = a quinol + NADP(+). In Burkholderia multivorans (strain ATCC 17616 / 249), this protein is NAD(P)H dehydrogenase (quinone).